The primary structure comprises 245 residues: tRNA pseudouridine synthase A (245 aa).

Catalysis depends on D52, which acts as the Nucleophile. A substrate-binding site is contributed by Y111.

Belongs to the tRNA pseudouridine synthase TruA family. As to quaternary structure, homodimer.

It catalyses the reaction uridine(38/39/40) in tRNA = pseudouridine(38/39/40) in tRNA. In terms of biological role, formation of pseudouridine at positions 38, 39 and 40 in the anticodon stem and loop of transfer RNAs. The protein is tRNA pseudouridine synthase A of Rickettsia africae (strain ESF-5).